Reading from the N-terminus, the 122-residue chain is Large ribosomal subunit protein uL14c (122 aa).

It belongs to the universal ribosomal protein uL14 family. As to quaternary structure, part of the 50S ribosomal subunit.

The protein localises to the plastid. It localises to the chloroplast. Binds to 23S rRNA. This chain is Large ribosomal subunit protein uL14c, found in Calycanthus floridus var. glaucus (Eastern sweetshrub).